The following is a 385-amino-acid chain: Exopolygalacturonase rpg16 (385 aa).

Positions 1-26 (MVRFTSFTSPFSAILLLSFGINKVAT) are cleaved as a signal peptide. N-linked (GlcNAc...) asparagine glycans are attached at residues Asn-143, Asn-161, Asn-164, and Asn-180. The PbH1 1 repeat unit spans residues 165 to 195 (STNLLLHDFIIHTVSNNSNPAKNTDALDLYH). The active-site Proton donor is the Asp-210. Cys-212 and Cys-229 are joined by a disulfide. 2 N-linked (GlcNAc...) asparagine glycosylation sites follow: Asn-218 and Asn-226. 3 PbH1 repeats span residues 219–241 (VTKVTVSNITCRGGHGYSIGSLG), 249–270 (VTQVNVYNSTCIDCQNGVRVKT), and 278–299 (VEDINFTDIYLEKAENPIIITT). His-233 is a catalytic residue. 3 N-linked (GlcNAc...) asparagine glycosylation sites follow: Asn-256, Asn-282, and Asn-343. An intrachain disulfide couples Cys-344 to Cys-350. One copy of the PbH1 5 repeat lies at 350-376 (CSDVTLTNINISKASNNTKNVCVNLKG). Residues Asn-359 and Asn-365 are each glycosylated (N-linked (GlcNAc...) asparagine).

This sequence belongs to the glycosyl hydrolase 28 family. N-glycosylated.

It is found in the secreted. It catalyses the reaction [(1-&gt;4)-alpha-D-galacturonosyl](n) + H2O = alpha-D-galacturonate + [(1-&gt;4)-alpha-D-galacturonosyl](n-1). Its function is as follows. Specific in hydrolyzing the terminal glycosidic bond of polygalacturonic acid and oligogalacturonates. This is Exopolygalacturonase rpg16 from Rhizopus delemar (strain RA 99-880 / ATCC MYA-4621 / FGSC 9543 / NRRL 43880) (Mucormycosis agent).